A 159-amino-acid polypeptide reads, in one-letter code: Ribosomal RNA large subunit methyltransferase H (159 aa).

S-adenosyl-L-methionine is bound by residues Leu-76, Gly-108, and 127-132; that span reads FSKMTF.

This sequence belongs to the RNA methyltransferase RlmH family. In terms of assembly, homodimer.

It localises to the cytoplasm. It carries out the reaction pseudouridine(1915) in 23S rRNA + S-adenosyl-L-methionine = N(3)-methylpseudouridine(1915) in 23S rRNA + S-adenosyl-L-homocysteine + H(+). In terms of biological role, specifically methylates the pseudouridine at position 1915 (m3Psi1915) in 23S rRNA. The chain is Ribosomal RNA large subunit methyltransferase H from Clostridium botulinum (strain 657 / Type Ba4).